Consider the following 1318-residue polypeptide: DNA-directed RNA polymerase subunit beta' (1318 aa).

Zn(2+) contacts are provided by C60, C62, C75, and C78. The Mg(2+) site is built by D535, D537, and D539. Positions 890, 967, 974, and 977 each coordinate Zn(2+).

The protein belongs to the RNA polymerase beta' chain family. As to quaternary structure, the RNAP catalytic core consists of 2 alpha, 1 beta, 1 beta' and 1 omega subunit. When a sigma factor is associated with the core the holoenzyme is formed, which can initiate transcription. It depends on Mg(2+) as a cofactor. The cofactor is Zn(2+).

The enzyme catalyses RNA(n) + a ribonucleoside 5'-triphosphate = RNA(n+1) + diphosphate. In terms of biological role, DNA-dependent RNA polymerase catalyzes the transcription of DNA into RNA using the four ribonucleoside triphosphates as substrates. The sequence is that of DNA-directed RNA polymerase subunit beta' from Rhodococcus erythropolis (strain PR4 / NBRC 100887).